We begin with the raw amino-acid sequence, 308 residues long: Methionine synthase (308 aa).

Zn(2+)-binding residues include H192, C194, E215, and C282.

Belongs to the archaeal MetE family. Zn(2+) is required as a cofactor.

It functions in the pathway amino-acid biosynthesis; L-methionine biosynthesis via de novo pathway. Catalyzes the transfer of a methyl group to L-homocysteine resulting in methionine formation. Can use methylcobalamin and methylcobinamide as methyl donors, but methylcobalamin is not considered to be the physiological substrate. In Methanocaldococcus jannaschii (strain ATCC 43067 / DSM 2661 / JAL-1 / JCM 10045 / NBRC 100440) (Methanococcus jannaschii), this protein is Methionine synthase.